A 469-amino-acid polypeptide reads, in one-letter code: DENN domain-containing protein 2D (469 aa).

The segment at 17–44 is disordered; the sequence is LPRLRAGQSQNNPGEAVTEPERIQEHSP. A uDENN domain is found at 55–204; the sequence is EYLLVVSLKK…AFPAPGKTVT (150 aa). Residues 226-359 enclose the cDENN domain; the sequence is HLEHVDFSVL…LQDDILDSLG (134 aa). A dDENN domain is found at 361-445; sequence GINELKTSEQ…QEAEKSRNPP (85 aa).

The protein localises to the cytoplasm. Guanine nucleotide exchange factor (GEF) which may activate RAB9A and RAB9B. Promotes the exchange of GDP to GTP, converting inactive GDP-bound Rab proteins into their active GTP-bound form. The sequence is that of DENN domain-containing protein 2D (Dennd2d) from Mus musculus (Mouse).